The primary structure comprises 627 residues: MFPLYLVRLLYPIGLIANLFFGFAFTLQWFLSERHKRACVPKAFWIFSSIGAILMIAHGFIQSQFPIALLHGANLVIYFRNLNISSSRKLSLKTTLIILAVTLLLTALPFALEAYYHPNMQWMASPNIFHLPLPPPNMYWHMIGCLGLFTFSCRFFIQWCHLEMNNQSTLPVLFWQVGFVGGFLAFLYFIRTGDPVNILSYGCGLFPSIANLRIIYKKSRLSEFHNPSYFISAGEASGDTLGSDLLRHIKALHPDKRCFGVGGPLMRQEGLEPLIHMEEFQVSGFLEILTSIFTLIKKYRKLYKAILKENPEIVFCIDFPDFHFFLIKKLRKCGYTGKIVHYVCPSIWAWRPKRKKILEKYLDTLLLILPFENELFINSPLKTIYLGHPLVKTISNFQHCPSWKQALAISDQPIVALFPGSRPGDILRNLQVHIRAFLASSLAESHQLLVSSYNLKHDQTILDLLEKEGCCGKTVPAMYRYHLMRDCDCALAKCGTIALEAALNQTPTIVTCLLRPFDIFLAKYIFKIFMSAYSLPNIITKSIIFPEFIGGKSDFTPEEVAAAIDILANPKSREKQKRACQTLLETMETNVVTVQECLQTIHSLKSRFHTENDCLGNYVQKNVRPSF.

Positions 1–224 (MFPLYLVRLL…IYKKSRLSEF (224 aa)) are unknown. Residues 225 to 627 (HNPSYFISAG…YVQKNVRPSF (403 aa)) are lipid-A-disaccharide synthase.

The protein in the C-terminal section; belongs to the LpxB family.

It carries out the reaction a lipid X + a UDP-2-N,3-O-bis[(3R)-3-hydroxyacyl]-alpha-D-glucosamine = a lipid A disaccharide + UDP + H(+). It participates in bacterial outer membrane biogenesis; LPS lipid A biosynthesis. Condensation of UDP-2,3-diacylglucosamine and 2,3-diacylglucosamine-1-phosphate to form lipid A disaccharide, a precursor of lipid A, a phosphorylated glycolipid that anchors the lipopolysaccharide to the outer membrane of the cell. The sequence is that of Lipid-A-disaccharide synthase (lpxB) from Chlamydia abortus (strain DSM 27085 / S26/3) (Chlamydophila abortus).